The following is a 68-amino-acid chain: MPKLKTKSAAKKRFKLTASGNVIASQAGKKHFMRRRTKAQIRNLRGTTILCNQEGYNIKKYFLPYGTN.

Belongs to the bacterial ribosomal protein bL35 family.

The protein is Large ribosomal subunit protein bL35 of Rickettsia canadensis (strain McKiel).